Reading from the N-terminus, the 143-residue chain is Large-conductance mechanosensitive channel (143 aa).

3 helical membrane-spanning segments follow: residues 10–30, 40–60, and 86–106; these read FAVK…GAFG, VIMP…LFLV, and GSFI…FMMV.

The protein belongs to the MscL family. In terms of assembly, homopentamer.

Its subcellular location is the cell inner membrane. Channel that opens in response to stretch forces in the membrane lipid bilayer. May participate in the regulation of osmotic pressure changes within the cell. The sequence is that of Large-conductance mechanosensitive channel from Paracidovorax citrulli (strain AAC00-1) (Acidovorax citrulli).